Consider the following 223-residue polypeptide: 2-C-methyl-D-erythritol 4-phosphate cytidylyltransferase (223 aa).

It belongs to the IspD/TarI cytidylyltransferase family. IspD subfamily.

The catalysed reaction is 2-C-methyl-D-erythritol 4-phosphate + CTP + H(+) = 4-CDP-2-C-methyl-D-erythritol + diphosphate. It participates in isoprenoid biosynthesis; isopentenyl diphosphate biosynthesis via DXP pathway; isopentenyl diphosphate from 1-deoxy-D-xylulose 5-phosphate: step 2/6. Its function is as follows. Catalyzes the formation of 4-diphosphocytidyl-2-C-methyl-D-erythritol from CTP and 2-C-methyl-D-erythritol 4-phosphate (MEP). This Prochlorococcus marinus (strain MIT 9215) protein is 2-C-methyl-D-erythritol 4-phosphate cytidylyltransferase.